Here is a 386-residue protein sequence, read N- to C-terminus: Succinate--CoA ligase [ADP-forming] subunit beta (386 aa).

The region spanning 9–244 (KHILSRFGVS…YDEEIKEEIE (236 aa)) is the ATP-grasp domain. ATP contacts are provided by residues Lys-46, 53 to 55 (GRG), Glu-99, Cys-102, and Glu-107. Mg(2+) is bound by residues Asn-199 and Asp-213. Residues Asn-264 and 320–322 (GIM) contribute to the substrate site.

Belongs to the succinate/malate CoA ligase beta subunit family. In terms of assembly, heterotetramer of two alpha and two beta subunits. Mg(2+) is required as a cofactor.

It carries out the reaction succinate + ATP + CoA = succinyl-CoA + ADP + phosphate. The enzyme catalyses GTP + succinate + CoA = succinyl-CoA + GDP + phosphate. Its pathway is carbohydrate metabolism; tricarboxylic acid cycle; succinate from succinyl-CoA (ligase route): step 1/1. Functionally, succinyl-CoA synthetase functions in the citric acid cycle (TCA), coupling the hydrolysis of succinyl-CoA to the synthesis of either ATP or GTP and thus represents the only step of substrate-level phosphorylation in the TCA. The beta subunit provides nucleotide specificity of the enzyme and binds the substrate succinate, while the binding sites for coenzyme A and phosphate are found in the alpha subunit. The protein is Succinate--CoA ligase [ADP-forming] subunit beta of Ehrlichia canis (strain Jake).